A 912-amino-acid polypeptide reads, in one-letter code: MINSLLTRVFGSRNERQLRQLTRLVTQINALEPTIEKLSDAELQAKTPEFKQRLAAGESLDKILPEAFAVCREASRRVLGMRHYDVQLIGGMVLHLGKIAEMRTGEGKTLVATLPVYLNALQGEGVHVVTVNDYLARRDAAQMGKLYNWLGLSVGVVYPGMPHSDKREAYGSDITYGTNNEFGFDYLRDNMALSRADRYQRTLHYAIVDEVDSILIDEARTPLIISGPADESPELYIRVNRIVPQLTKQESEEGEGDFWVDEKGKQVHLSEAGMGHAEELLLQAGILENAEDGLYAAQNLSVVHHLNAALRAHAIYQRDVDYIVRDGEVVIVDEFTGRTLSGRRWSDGLHQAVEAKEGVPVQRENQTLASITFQNLFRMYKKLSGMTGTADTEAYEFQSIYGLEVVVIPTNRPTVRKDHPDQVFLNRKGKFNAVLADIEDCAKRGQPVLVGTTSIETSEMLSEHLRKAGVKHEVLNAKQHEREATIVANAGQPGAVTIATNMAGRGTDIVLGGSLESEYHALGEDATEDARFKIKTDWQRRHDAVKAAGGLHIIGTERHESRRIDNQLRGRAGRQGDPGSSRFYLSLEDNLMRIFASDWVQKAMRMMGMKEDDVIEDRLVSRQIEKAQRKVEAHNFDIRKNLLDFDDVNNDQRKVIYAQRDELLDAESVKDNVDGIRGDVIYDLVARFVPPNSVDEQWDVKGLEATLESELGVTLSLTDMVRTQEEIDAEQIAAKVQAAVDAHFAEKEAAVGNDTMRALEKHVMLTVLDQGWKEHLAKMDYLRQGIYLRGYAQKQPKQEYKKEAFELFSEMLENVKREVIHLLARVRIRSEEEVAELEEQERLHAQARLMASQFQHQDVGGYGTDEEAAQVQSGNAPLPVSQVTRDEPKVGRNDPCPCGSGKKYKHCHGQLS.

Residues glutamine 87, 105 to 109, and aspartate 508 each bind ATP; that span reads GEGKT. The tract at residues 865–912 is disordered; it reads DEEAAQVQSGNAPLPVSQVTRDEPKVGRNDPCPCGSGKKYKHCHGQLS. 4 residues coordinate Zn(2+): cysteine 896, cysteine 898, cysteine 907, and histidine 908. A compositionally biased stretch (basic residues) spans 902 to 912; that stretch reads KKYKHCHGQLS.

This sequence belongs to the SecA family. As to quaternary structure, monomer and homodimer. Part of the essential Sec protein translocation apparatus which comprises SecA, SecYEG and auxiliary proteins SecDF-YajC and YidC. Zn(2+) serves as cofactor.

It localises to the cell inner membrane. The protein localises to the cytoplasm. It catalyses the reaction ATP + H2O + cellular proteinSide 1 = ADP + phosphate + cellular proteinSide 2.. In terms of biological role, part of the Sec protein translocase complex. Interacts with the SecYEG preprotein conducting channel. Has a central role in coupling the hydrolysis of ATP to the transfer of proteins into and across the cell membrane, serving both as a receptor for the preprotein-SecB complex and as an ATP-driven molecular motor driving the stepwise translocation of polypeptide chains across the membrane. In Xanthomonas oryzae pv. oryzae (strain PXO99A), this protein is Protein translocase subunit SecA.